We begin with the raw amino-acid sequence, 138 residues long: Enhancer of split malpha protein (138 aa).

It belongs to the M4-like protein family.

Part of the Notch signaling pathway. This chain is Enhancer of split malpha protein, found in Drosophila melanogaster (Fruit fly).